Consider the following 276-residue polypeptide: Cell division protein FtsQ (276 aa).

Topologically, residues 1–27 are cytoplasmic; it reads MSQAALNTRNSEEEVSSRRNNGTRLAG. Residues 28 to 48 traverse the membrane as a helical segment; that stretch reads ILFLLTVLTTVLVSGWVVLGW. Residues 49–276 are Periplasmic-facing; sequence MEDAQRLPLS…QQNQAQAEQQ (228 aa). In terms of domain architecture, POTRA spans 55–126; it reads LPLSKLVLTG…DELKIHLVEY (72 aa). The tract at residues 255–276 is disordered; that stretch reads GWAPLPPEESTQQQNQAQAEQQ. Positions 266-276 are enriched in low complexity; the sequence is QQQNQAQAEQQ.

Belongs to the FtsQ/DivIB family. FtsQ subfamily. In terms of assembly, part of a complex composed of FtsB, FtsL and FtsQ. The complex can be formed before its localization to the division site. This tripartite complex can be divided further into a subcomplex of FtsB and FtsL, which forms in the absence of FtsQ. Interacts with FtsA, FtsK, FtsL, FtsB, FtsW, FtsI, FtsN, FtsX and YmgF.

The protein resides in the cell inner membrane. Functionally, essential cell division protein. May link together the upstream cell division proteins, which are predominantly cytoplasmic, with the downstream cell division proteins, which are predominantly periplasmic. May control correct divisome assembly. This is Cell division protein FtsQ from Escherichia coli (strain K12).